The chain runs to 629 residues: 5-aminolevulinate synthase, mitochondrial (629 aa).

The transit peptide at 1–69 directs the protein to the mitochondrion; it reads MDSVLRQSKA…VQSARTGGRA (69 aa). Substrate is bound by residues Arg-155, Ser-268, and Lys-287. Pyridoxal 5'-phosphate-binding residues include Ser-320, His-348, and Thr-388. Lys-391 is an active-site residue. Lys-391 bears the N6-(pyridoxal phosphate)lysine mark. The pyridoxal 5'-phosphate site is built by Thr-420 and Thr-421. Position 506 (Thr-506) interacts with substrate.

This sequence belongs to the class-II pyridoxal-phosphate-dependent aminotransferase family. As to quaternary structure, homodimer. Pyridoxal 5'-phosphate serves as cofactor.

It localises to the mitochondrion matrix. The catalysed reaction is succinyl-CoA + glycine + H(+) = 5-aminolevulinate + CO2 + CoA. The protein operates within porphyrin-containing compound metabolism; protoporphyrin-IX biosynthesis; 5-aminolevulinate from glycine: step 1/1. Functionally, catalyzes the synthesis of 5-aminolevulinate (ALA) from succinyl-CoA and glycine, the first and rate-limiting step in heme biosynthesis. This chain is 5-aminolevulinate synthase, mitochondrial (alv-1), found in Neurospora crassa (strain ATCC 24698 / 74-OR23-1A / CBS 708.71 / DSM 1257 / FGSC 987).